Here is a 158-residue protein sequence, read N- to C-terminus: NAD(P)H-quinone oxidoreductase subunit J, chloroplastic (158 aa).

The protein belongs to the complex I 30 kDa subunit family. As to quaternary structure, NDH is composed of at least 16 different subunits, 5 of which are encoded in the nucleus.

The protein localises to the plastid. It is found in the chloroplast thylakoid membrane. It carries out the reaction a plastoquinone + NADH + (n+1) H(+)(in) = a plastoquinol + NAD(+) + n H(+)(out). It catalyses the reaction a plastoquinone + NADPH + (n+1) H(+)(in) = a plastoquinol + NADP(+) + n H(+)(out). Its function is as follows. NDH shuttles electrons from NAD(P)H:plastoquinone, via FMN and iron-sulfur (Fe-S) centers, to quinones in the photosynthetic chain and possibly in a chloroplast respiratory chain. The immediate electron acceptor for the enzyme in this species is believed to be plastoquinone. Couples the redox reaction to proton translocation, and thus conserves the redox energy in a proton gradient. The protein is NAD(P)H-quinone oxidoreductase subunit J, chloroplastic of Liriodendron tulipifera (Tuliptree).